We begin with the raw amino-acid sequence, 190 residues long: Segregation and condensation protein B (190 aa).

The protein belongs to the ScpB family. In terms of assembly, homodimer. Homodimerization may be required to stabilize the binding of ScpA to the Smc head domains. Component of a cohesin-like complex composed of ScpA, ScpB and the Smc homodimer, in which ScpA and ScpB bind to the head domain of Smc. The presence of the three proteins is required for the association of the complex with DNA.

Its subcellular location is the cytoplasm. Functionally, participates in chromosomal partition during cell division. May act via the formation of a condensin-like complex containing Smc and ScpA that pull DNA away from mid-cell into both cell halves. In Bacillus cereus (strain AH187), this protein is Segregation and condensation protein B.